Here is an 81-residue protein sequence, read N- to C-terminus: Small cysteine-rich protein 6 (81 aa).

The first 23 residues, 1 to 23 (MDTKVACLLLIILGALTVQGAVS), serve as a signal peptide directing secretion. Residues 24–25 (GN) constitute a propeptide that is removed on maturation.

This sequence belongs to the Cnidaria small cysteine-rich protein (SCRiP) family. beta subfamily. Contains 4 disulfide bonds.

The protein localises to the secreted. Its subcellular location is the nematocyst. Induces neurotoxic symptoms on zebrafish. Has also been claimed to be implied in calcification, but tests on homolog proteins suggest that proteins of this family have a neurotoxic function and not a calcification function. In Orbicella faveolata (Mountainous star coral), this protein is Small cysteine-rich protein 6.